The following is a 473-amino-acid chain: ATP synthase subunit beta (473 aa).

Residue Gly-158–Thr-165 coordinates ATP.

It belongs to the ATPase alpha/beta chains family. As to quaternary structure, F-type ATPases have 2 components, CF(1) - the catalytic core - and CF(0) - the membrane proton channel. CF(1) has five subunits: alpha(3), beta(3), gamma(1), delta(1), epsilon(1). CF(0) has three main subunits: a(1), b(2) and c(9-12). The alpha and beta chains form an alternating ring which encloses part of the gamma chain. CF(1) is attached to CF(0) by a central stalk formed by the gamma and epsilon chains, while a peripheral stalk is formed by the delta and b chains.

The protein localises to the cell membrane. It catalyses the reaction ATP + H2O + 4 H(+)(in) = ADP + phosphate + 5 H(+)(out). Produces ATP from ADP in the presence of a proton gradient across the membrane. The catalytic sites are hosted primarily by the beta subunits. This is ATP synthase subunit beta from Geobacillus kaustophilus (strain HTA426).